The following is a 186-amino-acid chain: MKRKVPNIIITGVPGSGKSTLCEELKEIINKELLKRNDMEGFEMTHLNLSNIIKDERLYKEFDDELDASIYSEELLNEYLKKKYKLEKGGYIIDFHDINFVKDVDIIDKIFLLTIQTNFLYERLEKRNYTKEKIKNNIECEIFQVIKEDILDHFPNTNILQEIENNDLQQYDNNLSIIKNWVLSYI.

ATP is bound by residues Gly-15, Gly-17, Lys-18, Ser-19, and Thr-20. Positions 48-71 are NMPbind; it reads NLSNIIKDERLYKEFDDELDASIY. Residues 126–136 are LID; the sequence is KRNYTKEKIKN. An ATP-binding site is contributed by Arg-127.

Belongs to the adenylate kinase family. AK6 subfamily. Monomer and homodimer. Interacts with small ribosomal subunit protein uS11. Not a structural component of 43S pre-ribosomes, but transiently interacts with them by binding to uS11.

Its subcellular location is the cytoplasm. It localises to the nucleus. It carries out the reaction AMP + ATP = 2 ADP. The enzyme catalyses ATP + H2O = ADP + phosphate + H(+). Broad-specificity nucleoside monophosphate (NMP) kinase that catalyzes the reversible transfer of the terminal phosphate group between nucleoside triphosphates and monophosphates. Also has ATPase activity. Involved in the late cytoplasmic maturation steps of the 40S ribosomal particles, specifically 18S rRNA maturation. While NMP activity is not required for ribosome maturation, ATPase activity is. Associates transiently with small ribosomal subunit protein uS11. ATP hydrolysis breaks the interaction with uS11. May temporarily remove uS11 from the ribosome to enable a conformational change of the ribosomal RNA that is needed for the final maturation step of the small ribosomal subunit. Its NMP activity may have a role in nuclear energy homeostasis. The chain is Adenylate kinase isoenzyme 6 homolog from Plasmodium falciparum (isolate 3D7).